The following is a 182-amino-acid chain: Oligoribonuclease (182 aa).

Residues 8–171 (LIWIDLEMTG…DDIRESIKEL (164 aa)) enclose the Exonuclease domain. Tyr-129 is an active-site residue.

The protein belongs to the oligoribonuclease family.

The protein localises to the cytoplasm. 3'-to-5' exoribonuclease specific for small oligoribonucleotides. This chain is Oligoribonuclease, found in Haemophilus influenzae (strain PittGG).